A 196-amino-acid polypeptide reads, in one-letter code: Small ribosomal subunit protein uS4c (196 aa).

The segment at 17 to 36 is disordered; that stretch reads ALPGLTRKTPKSGSNLKKKF. An S4 RNA-binding domain is found at 89–169; it reads MRLDNILFRL…LPKHLTIDTL (81 aa).

This sequence belongs to the universal ribosomal protein uS4 family. In terms of assembly, part of the 30S ribosomal subunit. Contacts protein S5. The interaction surface between S4 and S5 is involved in control of translational fidelity.

The protein resides in the plastid. Its subcellular location is the chloroplast. In terms of biological role, one of the primary rRNA binding proteins, it binds directly to 16S rRNA where it nucleates assembly of the body of the 30S subunit. Its function is as follows. With S5 and S12 plays an important role in translational accuracy. The sequence is that of Small ribosomal subunit protein uS4c (rps4) from Festuca gigantea (Giant fescue).